The chain runs to 323 residues: tRNA U34 carboxymethyltransferase (323 aa).

Carboxy-S-adenosyl-L-methionine contacts are provided by residues K91, W105, K110, G130, 152–154, 181–182, M196, Y200, and R315; these read DPS and IE.

It belongs to the class I-like SAM-binding methyltransferase superfamily. CmoB family. As to quaternary structure, homotetramer.

The enzyme catalyses carboxy-S-adenosyl-L-methionine + 5-hydroxyuridine(34) in tRNA = 5-carboxymethoxyuridine(34) in tRNA + S-adenosyl-L-homocysteine + H(+). Catalyzes carboxymethyl transfer from carboxy-S-adenosyl-L-methionine (Cx-SAM) to 5-hydroxyuridine (ho5U) to form 5-carboxymethoxyuridine (cmo5U) at position 34 in tRNAs. In Vibrio parahaemolyticus serotype O3:K6 (strain RIMD 2210633), this protein is tRNA U34 carboxymethyltransferase.